Here is a 611-residue protein sequence, read N- to C-terminus: Growth hormone receptor (611 aa).

Positions 1–20 are cleaved as a signal peptide; it reads MDLRHLLLTLVLVCANDSLS. N-linked (GlcNAc...) asparagine glycosylation occurs at Asn-16. Topologically, residues 21–240 are extracellular; sequence ASDDVLRLPQ…EFVHCAEEIE (220 aa). An intrachain disulfide couples Cys-34 to Cys-44. Residue Asn-53 is glycosylated (N-linked (GlcNAc...) asparagine). An intrachain disulfide couples Cys-75 to Cys-86. The N-linked (GlcNAc...) asparagine glycan is linked to Asn-89. A disulfide bridge links Cys-100 with Cys-114. The Fibronectin type-III domain occupies 125–228; that stretch reads PPVHLNWTLL…EILYVSFSQA (104 aa). 3 N-linked (GlcNAc...) asparagine glycosylation sites follow: Asn-130, Asn-135, and Asn-174. The WSXWS motif signature appears at 214–218; sequence FGEFS. The chain crosses the membrane as a helical span at residues 241-264; it reads FPWFLVVIFGACGLAVTVILILLS. The Cytoplasmic segment spans residues 265 to 611; sequence KQSRLKMLIF…STDQLNKIMP (347 aa). Positions 270–355 are required for JAK2 binding; the sequence is KMLIFPPVPV…HLKSHSCLGA (86 aa). Positions 273–281 match the Box 1 motif motif; it reads IFPPVPVPK. The UbE motif signature appears at 316–325; sequence DLWVEFIELD. The interval 411–455 is disordered; that stretch reads SLPSLANTDTQQPRMSTRPENSQPWPPFADSIDAASPSAHNQLSN. The segment covering 414–433 has biased composition (polar residues); it reads SLANTDTQQPRMSTRPENSQ.

Belongs to the type I cytokine receptor family. Type 1 subfamily. The soluble form (GHBP) is produced by phorbol ester-promoted proteolytic cleavage at the cell surface (shedding) by ADAM17/TACE.

It is found in the cell membrane. The protein localises to the secreted. Functionally, receptor for pituitary gland growth hormone (GH1) involved in regulating postnatal body growth. On ligand binding, couples to the JAK2/STAT5 pathway. In terms of biological role, the soluble form (GHBP) acts as a reservoir of growth hormone in plasma and may be a modulator/inhibitor of GH signaling. The polypeptide is Growth hormone receptor (GHR) (Columba livia (Rock dove)).